The primary structure comprises 737 residues: Protein OPG064 (737 aa).

Residue Met-1 is modified to N-acetylmethionine; by host. Cys-496 and Cys-535 are oxidised to a cystine.

This sequence belongs to the orthopoxvirus OPG064 family. Interacts with host KLC2; this interaction promotes IEV trafficking by engaging the host kinesin-1 complex. Interacts with protein OPG056. N-acetylated on initiator methionine by host.

Plays a role in intracellular enveloped virus (IEV) transport to the cell surface on microtubules. Together with protein OPG056, forms a complex that interacts with host KLC2 (kinesin light chain isoform 2) to engage the kinesin-1 complex and thereby promote IEV trafficking. The protein is Protein OPG064 (OPG064) of Homo sapiens (Human).